An 803-amino-acid chain; its full sequence is Leucine--tRNA ligase (803 aa).

The short motif at 40-51 (PYPSGAGLHVGH) is the 'HIGH' region element. Positions 575-579 (KMSKS) match the 'KMSKS' region motif. Position 578 (Lys-578) interacts with ATP.

The protein belongs to the class-I aminoacyl-tRNA synthetase family.

Its subcellular location is the cytoplasm. The catalysed reaction is tRNA(Leu) + L-leucine + ATP = L-leucyl-tRNA(Leu) + AMP + diphosphate. The protein is Leucine--tRNA ligase of Listeria welshimeri serovar 6b (strain ATCC 35897 / DSM 20650 / CCUG 15529 / CIP 8149 / NCTC 11857 / SLCC 5334 / V8).